Consider the following 84-residue polypeptide: MALSSQIWAACLLLLLLLASLTSGSVFPQQTGQLAELQPQDRAGARAGWTPMLQRRRRRDTHFPIYIFCCGCCHRSKCGMCCKT.

The N-terminal stretch at 1–24 (MALSSQIWAACLLLLLLLASLTSG) is a signal peptide. A propeptide spanning residues 25–54 (SVFPQQTGQLAELQPQDRAGARAGWTPMLQ) is cleaved from the precursor. 3 disulfide bridges follow: Cys69/Cys72, Cys70/Cys78, and Cys73/Cys81.

Belongs to the hepcidin family. Interacts with SLC40A1; this interaction promotes SLC40A1 rapid ubiquitination.

It localises to the secreted. Its function is as follows. Liver-produced hormone that constitutes the main circulating regulator of iron absorption and distribution across tissues. Acts by promoting endocytosis and degradation of ferroportin/SLC40A1, leading to the retention of iron in iron-exporting cells and decreased flow of iron into plasma. Controls the major flows of iron into plasma: absorption of dietary iron in the intestine, recycling of iron by macrophages, which phagocytose old erythrocytes and other cells, and mobilization of stored iron from hepatocytes. In terms of biological role, has strong antimicrobial activity against E.coli ML35P N.cinerea and weaker against S.epidermidis, S.aureus and group b streptococcus bacteria. Active against the fungus C.albicans. No activity against P.aeruginosa. The protein is Hepcidin (HAMP) of Pongo abelii (Sumatran orangutan).